A 206-amino-acid chain; its full sequence is Putative transporter protein AmiS2 (206 aa).

7 consecutive transmembrane segments (helical) span residues 4–24 (VGLL…LGTV), 29–49 (ASVL…VMLI), 56–76 (SAVL…YVGI), 86–106 (GIGW…FLSF), 113–133 (VFGV…LVLG), 142–162 (FTGW…AFLI), and 173–193 (VAAG…ILAA).

This sequence belongs to the AmiS/UreI family.

It is found in the cell membrane. Functionally, possible transporter that might be responsible for the adsorption of amidase substrates or release of their hydrolysis products. In Rhodococcus erythropolis (Arthrobacter picolinophilus), this protein is Putative transporter protein AmiS2 (amiS2).